Here is a 441-residue protein sequence, read N- to C-terminus: FAM10 family protein At4g22670 (441 aa).

The disordered stretch occupies residues 41–114 (KIPTGVHEED…PQKMGDSSVE (74 aa)). A compositionally biased stretch (basic and acidic residues) spans 46 to 55 (VHEEDKDTKP). Acidic residues-rich tracts occupy residues 61–71 (EESDDDMDETE) and 78–102 (EEEE…EPDN). S63 and S89 each carry phosphoserine. TPR repeat units follow at residues 121–156 (EAAQ…NPTS), 158–190 (IMYG…NPDS), and 191–224 (AKGY…DYDE). Residues 236 to 285 (NAHKLEEHRRKYDRLRKEREDKKAERDRLRRRAEAQAAYDKAKKEEQSSS) adopt a coiled-coil conformation. Basic and acidic residues predominate over residues 244-282 (RRKYDRLRKEREDKKAERDRLRRRAEAQAAYDKAKKEEQ). The interval 244 to 314 (RRKYDRLRKE…MPGGFPGGMG (71 aa)) is disordered. Positions 289–314 (SGGGFPGGMPGGFPGGMPGGFPGGMG) are enriched in gly residues. Positions 391–430 (DPELMTAFSDPEVMAALQDVMKNPANLAKHQANPKVAPVI) constitute an STI1 domain.

This sequence belongs to the FAM10 family.

This Arabidopsis thaliana (Mouse-ear cress) protein is FAM10 family protein At4g22670.